A 302-amino-acid polypeptide reads, in one-letter code: Homoserine O-acetyltransferase (302 aa).

Cys-142 serves as the catalytic Acyl-thioester intermediate. Residues Lys-163 and Ser-192 each coordinate substrate. Residue His-235 is the Proton acceptor of the active site. Glu-237 is an active-site residue. Arg-249 lines the substrate pocket.

Belongs to the MetA family.

The protein resides in the cytoplasm. It carries out the reaction L-homoserine + acetyl-CoA = O-acetyl-L-homoserine + CoA. It participates in amino-acid biosynthesis; L-methionine biosynthesis via de novo pathway; O-acetyl-L-homoserine from L-homoserine: step 1/1. Its function is as follows. Transfers an acetyl group from acetyl-CoA to L-homoserine, forming acetyl-L-homoserine. This chain is Homoserine O-acetyltransferase, found in Geobacillus kaustophilus.